Consider the following 1427-residue polypeptide: Coiled-coil domain-containing protein 144A (1427 aa).

Basic and acidic residues predominate over residues 1–11 (MASWGGEKRGG). Disordered stretches follow at residues 1 to 32 (MASW…VGSQ), 87 to 189 (AARS…LTER), 213 to 261 (LPEN…CDRE), 453 to 485 (NMNQ…DSDR), and 528 to 586 (EEEM…EVKN). 2 stretches are compositionally biased toward polar residues: residues 129 to 150 (PESL…LSDE) and 167 to 178 (VSPSMPENQSAT). Over residues 224–234 (QDSELTSEEEQ) the composition is skewed to acidic residues. Residues 453 to 467 (NMNQNSDSGSTNNYK) are compositionally biased toward polar residues. Residues 490–545 (YLHEELQQDMQKFKNEVNTLEEEFLALKKEDVQLHKDVEEEMEKHRSNSTELSGTL) adopt a coiled-coil conformation. Positions 528-537 (EEEMEKHRSN) are enriched in basic and acidic residues. Residues 543-552 (GTLTDGTTVG) show a composition bias toward low complexity. The segment covering 563–584 (PRKENGEHDRPADKTSNEKNEV) has biased composition (basic and acidic residues). Coiled coils occupy residues 648-1129 (LLKL…DLTE) and 1155-1309 (FSMK…TQLT).

This sequence belongs to the CCDC144 family.

Its function is as follows. May play a role in preventing the formation of kidney stones through inhibition of calcium oxalate monohydrate (COM) crystallization, attenuating COM-induced apoptotic injury to renal epithelial cells. May exhibit antilithiatic (preventing the formation of kidney stones) activity through crystal binding, hindering the crystal attachment to renal epithelial cells, a pre-requisite to initiate inflammatory response. The sequence is that of Coiled-coil domain-containing protein 144A (CCDC144A) from Homo sapiens (Human).